Reading from the N-terminus, the 408-residue chain is Acetate kinase (408 aa).

A Mg(2+)-binding site is contributed by Asn7. Lys14 lines the ATP pocket. Residue Arg91 participates in substrate binding. Asp148 (proton donor/acceptor) is an active-site residue. ATP contacts are provided by residues 208–212 (HLGNG), 283–285 (DFR), and 331–335 (GIGEN). Glu384 contributes to the Mg(2+) binding site.

This sequence belongs to the acetokinase family. In terms of assembly, homodimer. Requires Mg(2+) as cofactor. Mn(2+) is required as a cofactor.

The protein localises to the cytoplasm. The catalysed reaction is acetate + ATP = acetyl phosphate + ADP. It functions in the pathway metabolic intermediate biosynthesis; acetyl-CoA biosynthesis; acetyl-CoA from acetate: step 1/2. Catalyzes the formation of acetyl phosphate from acetate and ATP. Can also catalyze the reverse reaction. The chain is Acetate kinase from Methanosarcina mazei (Methanosarcina frisia).